Here is a 351-residue protein sequence, read N- to C-terminus: Probable dual-specificity RNA methyltransferase RlmN (351 aa).

Glutamate 92 functions as the Proton acceptor in the catalytic mechanism. Residues 98–334 enclose the Radical SAM core domain; that stretch reads SGDRLTVCVS…VRWSKGLGAD (237 aa). An intrachain disulfide couples cysteine 105 to cysteine 337. [4Fe-4S] cluster contacts are provided by cysteine 112, cysteine 116, and cysteine 119. Residues 159–160, serine 189, 218–220, and asparagine 294 each bind S-adenosyl-L-methionine; these read GE and SLH. The active-site S-methylcysteine intermediate is cysteine 337.

Belongs to the radical SAM superfamily. RlmN family. [4Fe-4S] cluster serves as cofactor.

Its subcellular location is the cytoplasm. The catalysed reaction is adenosine(2503) in 23S rRNA + 2 reduced [2Fe-2S]-[ferredoxin] + 2 S-adenosyl-L-methionine = 2-methyladenosine(2503) in 23S rRNA + 5'-deoxyadenosine + L-methionine + 2 oxidized [2Fe-2S]-[ferredoxin] + S-adenosyl-L-homocysteine. It carries out the reaction adenosine(37) in tRNA + 2 reduced [2Fe-2S]-[ferredoxin] + 2 S-adenosyl-L-methionine = 2-methyladenosine(37) in tRNA + 5'-deoxyadenosine + L-methionine + 2 oxidized [2Fe-2S]-[ferredoxin] + S-adenosyl-L-homocysteine. Functionally, specifically methylates position 2 of adenine 2503 in 23S rRNA and position 2 of adenine 37 in tRNAs. The protein is Probable dual-specificity RNA methyltransferase RlmN of Synechococcus sp. (strain ATCC 27144 / PCC 6301 / SAUG 1402/1) (Anacystis nidulans).